The chain runs to 155 residues: Small ribosomal subunit protein uS7cz/uS7cy (155 aa).

This sequence belongs to the universal ribosomal protein uS7 family. In terms of assembly, part of the 30S ribosomal subunit.

The protein resides in the plastid. It localises to the chloroplast. Functionally, one of the primary rRNA binding proteins, it binds directly to 16S rRNA where it nucleates assembly of the head domain of the 30S subunit. In Atropa belladonna (Belladonna), this protein is Small ribosomal subunit protein uS7cz/uS7cy (rps7-A).